We begin with the raw amino-acid sequence, 468 residues long: Phosphatidylglycerol--prolipoprotein diacylglyceryl transferase (468 aa).

The next 3 helical transmembrane spans lie at L21–G41, Y56–A76, and I96–I116. R144 lines the a 1,2-diacyl-sn-glycero-3-phospho-(1'-sn-glycerol) pocket. Helical transmembrane passes span V192 to I212, F218 to F238, and I256 to P276. The tract at residues V349–Q468 is disordered. The span at A391–S406 shows a compositional bias: low complexity. The span at D445–S455 shows a compositional bias: basic and acidic residues. Residues R456 to Q468 show a composition bias toward basic residues.

This sequence belongs to the Lgt family.

The protein localises to the cell membrane. The catalysed reaction is L-cysteinyl-[prolipoprotein] + a 1,2-diacyl-sn-glycero-3-phospho-(1'-sn-glycerol) = an S-1,2-diacyl-sn-glyceryl-L-cysteinyl-[prolipoprotein] + sn-glycerol 1-phosphate + H(+). Its pathway is protein modification; lipoprotein biosynthesis (diacylglyceryl transfer). Its function is as follows. Catalyzes the transfer of the diacylglyceryl group from phosphatidylglycerol to the sulfhydryl group of the N-terminal cysteine of a prolipoprotein, the first step in the formation of mature lipoproteins. In Mycobacterium bovis (strain ATCC BAA-935 / AF2122/97), this protein is Phosphatidylglycerol--prolipoprotein diacylglyceryl transferase.